The chain runs to 150 residues: 3-dehydroquinate dehydratase (150 aa).

The active-site Proton acceptor is the tyrosine 26. Substrate is bound by residues asparagine 77, histidine 83, and aspartate 90. Catalysis depends on histidine 103, which acts as the Proton donor. Substrate is bound by residues 104–105 and arginine 114; that span reads LS.

The protein belongs to the type-II 3-dehydroquinase family. Homododecamer.

It carries out the reaction 3-dehydroquinate = 3-dehydroshikimate + H2O. The protein operates within metabolic intermediate biosynthesis; chorismate biosynthesis; chorismate from D-erythrose 4-phosphate and phosphoenolpyruvate: step 3/7. Catalyzes a trans-dehydration via an enolate intermediate. This chain is 3-dehydroquinate dehydratase, found in Klebsiella pneumoniae (strain 342).